The primary structure comprises 298 residues: Nucleotide-binding protein RSKD131_3085 (298 aa).

11-18 contacts ATP; sequence GPSGAGRT. Residue 58-61 participates in GTP binding; it reads DVRN.

Belongs to the RapZ-like family.

Its function is as follows. Displays ATPase and GTPase activities. The polypeptide is Nucleotide-binding protein RSKD131_3085 (Cereibacter sphaeroides (strain KD131 / KCTC 12085) (Rhodobacter sphaeroides)).